The chain runs to 542 residues: uncharacterized protein (542 aa).

The span at 125–138 (ANSNSSSTGRDSTP) shows a compositional bias: low complexity. 4 disordered regions span residues 125–182 (ANSN…NHHN), 194–333 (LPPT…CSSS), 390–428 (SSST…YSSI), and 459–487 (SSSS…PSCN). The segment covering 202-213 (QKPSFLSNSNQI) has biased composition (polar residues). Low complexity-rich tracts occupy residues 228-306 (SYTS…NSNN), 314-333 (NKLS…CSSS), 390-423 (SSST…TSTN), and 459-479 (SSSS…GGNS).

This is an uncharacterized protein from Dictyostelium discoideum (Social amoeba).